We begin with the raw amino-acid sequence, 459 residues long: tRNA modification GTPase MnmE (459 aa).

R22, E85, and R124 together coordinate (6S)-5-formyl-5,6,7,8-tetrahydrofolate. In terms of domain architecture, TrmE-type G spans 221-380 (GLSTVIVGKP…LEIQIRDLFF (160 aa)). N231 contributes to the K(+) binding site. GTP contacts are provided by residues 231–236 (NVGKSS), 250–256 (TEVAGTT), and 275–278 (DTAG). S235 is a Mg(2+) binding site. Positions 250, 252, and 255 each coordinate K(+). T256 lines the Mg(2+) pocket. Residue K459 coordinates (6S)-5-formyl-5,6,7,8-tetrahydrofolate.

The protein belongs to the TRAFAC class TrmE-Era-EngA-EngB-Septin-like GTPase superfamily. TrmE GTPase family. As to quaternary structure, homodimer. Heterotetramer of two MnmE and two MnmG subunits. K(+) is required as a cofactor.

It localises to the cytoplasm. Exhibits a very high intrinsic GTPase hydrolysis rate. Involved in the addition of a carboxymethylaminomethyl (cmnm) group at the wobble position (U34) of certain tRNAs, forming tRNA-cmnm(5)s(2)U34. The chain is tRNA modification GTPase MnmE from Staphylococcus aureus (strain MSSA476).